The chain runs to 429 residues: 4-hydroxy-3-methylbut-2-en-1-yl diphosphate synthase (flavodoxin) (429 aa).

[4Fe-4S] cluster is bound by residues cysteine 310, cysteine 313, cysteine 356, and glutamate 363.

The protein belongs to the IspG family. [4Fe-4S] cluster is required as a cofactor.

It catalyses the reaction (2E)-4-hydroxy-3-methylbut-2-enyl diphosphate + oxidized [flavodoxin] + H2O + 2 H(+) = 2-C-methyl-D-erythritol 2,4-cyclic diphosphate + reduced [flavodoxin]. Its pathway is isoprenoid biosynthesis; isopentenyl diphosphate biosynthesis via DXP pathway; isopentenyl diphosphate from 1-deoxy-D-xylulose 5-phosphate: step 5/6. Converts 2C-methyl-D-erythritol 2,4-cyclodiphosphate (ME-2,4cPP) into 1-hydroxy-2-methyl-2-(E)-butenyl 4-diphosphate. In Bradyrhizobium sp. (strain BTAi1 / ATCC BAA-1182), this protein is 4-hydroxy-3-methylbut-2-en-1-yl diphosphate synthase (flavodoxin).